We begin with the raw amino-acid sequence, 394 residues long: 1-deoxy-D-xylulose 5-phosphate reductoisomerase (394 aa).

Residues threonine 14, glycine 15, serine 16, isoleucine 17, glycine 40, and asparagine 128 each coordinate NADPH. Lysine 129 contacts 1-deoxy-D-xylulose 5-phosphate. NADPH is bound at residue glutamate 130. A Mn(2+)-binding site is contributed by aspartate 154. Residues serine 155, glutamate 156, serine 180, and histidine 203 each contribute to the 1-deoxy-D-xylulose 5-phosphate site. Glutamate 156 provides a ligand contact to Mn(2+). Glycine 209 is an NADPH binding site. 4 residues coordinate 1-deoxy-D-xylulose 5-phosphate: serine 216, asparagine 221, lysine 222, and glutamate 225. Mn(2+) is bound at residue glutamate 225.

Belongs to the DXR family. It depends on Mg(2+) as a cofactor. Mn(2+) serves as cofactor.

It catalyses the reaction 2-C-methyl-D-erythritol 4-phosphate + NADP(+) = 1-deoxy-D-xylulose 5-phosphate + NADPH + H(+). The protein operates within isoprenoid biosynthesis; isopentenyl diphosphate biosynthesis via DXP pathway; isopentenyl diphosphate from 1-deoxy-D-xylulose 5-phosphate: step 1/6. Catalyzes the NADPH-dependent rearrangement and reduction of 1-deoxy-D-xylulose-5-phosphate (DXP) to 2-C-methyl-D-erythritol 4-phosphate (MEP). The chain is 1-deoxy-D-xylulose 5-phosphate reductoisomerase from Xylella fastidiosa (strain M12).